A 687-amino-acid chain; its full sequence is MKQMSYVTRWLYSTSHKDIGMTYLGFGMLSAMMGTGMSVMMRMELSNGNSQFFHGNNQAFNVMMSGHALLMMFFFIMPVWMGAFGNFFLPMLMGAADMAFARLNNISFWCLPPALVCMVCSVLMEQGAGTGFTTYPPLSSMSAHSGPSVDLAMFAMHLTSMSSLLGAMNFMVTVLNMRTMGLHMVNMPLFAWAMFLTAMLLLLSLPVLTAAVTLLLMDRNFNTGFYEVGAGGDPVTYEHLFWFFGHPEVYILMMPGFGVMSHMVSTYSKKPMFGEMGMLYAMGSIGFLGFLVWSHHMFVVGLDIDSRAYFTSATMVIAVPTGIKIFSWLATIYGGELRLGVPMLFALGFLFLFTMGGLTGVMTSNASMDVAFHDRIFIYYVSFFLYTLYNMYNNYTNNNTAHKGRHCANASYNNDINNLVSFMDKNEYIKMFWVGLMDGDGSMQVNHWRKKNLQYRLIMKTSNLESNYNMLMLMAKVMGGTVRISKKKDNVMWVVDSKESIKDMMKMFDKYPLLTSRKMCQINFMKKCMKLNYMPAEGGYPREAGTDWYLLNRNYKYNDQLNMINTFNLKLKNKSFMNALPEGHGMHHMVKHSEYFKCWLSGFMEAEGCFSIRLNKSNSFSMGQNDDFYLMEEIKQFFNATNSVRNSYKNFYCLEIYKRIMLNNIITHCSNYPLLGEKKESLMKFLK.

The tract at residues 1-374 (MKQMSYVTRW…NASMDVAFHD (374 aa)) is COX1 exons 1 to 3 encoded. 10 helical membrane passes run 19 to 39 (IGMT…GMSV), 69 to 89 (LLMM…NFFL), 103 to 123 (LNNI…CSVL), 152 to 172 (AMFA…NFMV), 188 to 208 (PLFA…LPVL), 240 to 260 (LFWF…FGVM), 273 to 293 (FGEM…FLVW), 315 to 335 (MVIA…IYGG), 341 to 361 (VPML…LTGV), and 376 to 396 (IFIY…NNYT). Positions 375-687 (RIFIYYVSFF…KKESLMKFLK (313 aa)) are COX1 intron 3 encoded.

It in the C-terminal section; belongs to the LAGLIDADG endonuclease family. This sequence in the N-terminal section; belongs to the heme-copper respiratory oxidase family. The mature protein may arise from proteolytic cleavage of an in-frame translation of COX1 exons 1 to 3 plus intron 3, containing the aI3 open reading frame.

It is found in the mitochondrion. It localises to the membrane. In terms of biological role, mitochondrial DNA endonuclease involved in intron homing. The polypeptide is Probable intron-encoded endonuclease aI3 (aI3) (Debaryomyces hansenii (strain ATCC 36239 / CBS 767 / BCRC 21394 / JCM 1990 / NBRC 0083 / IGC 2968) (Yeast)).